We begin with the raw amino-acid sequence, 182 residues long: Inosine/xanthosine triphosphatase (182 aa).

Residues Asp-38 and Glu-68 each contribute to the Mg(2+) site. Position 68 to 69 (68 to 69 (EA)) interacts with substrate.

This sequence belongs to the YjjX NTPase family. In terms of assembly, homodimer. Mg(2+) serves as cofactor. It depends on Mn(2+) as a cofactor.

It carries out the reaction XTP + H2O = XDP + phosphate + H(+). The catalysed reaction is ITP + H2O = IDP + phosphate + H(+). Phosphatase that hydrolyzes non-canonical purine nucleotides such as XTP and ITP to their respective diphosphate derivatives. Probably excludes non-canonical purines from DNA/RNA precursor pool, thus preventing their incorporation into DNA/RNA and avoiding chromosomal lesions. The protein is Inosine/xanthosine triphosphatase of Erwinia tasmaniensis (strain DSM 17950 / CFBP 7177 / CIP 109463 / NCPPB 4357 / Et1/99).